The following is a 67-amino-acid chain: Conotoxin TsMMSK-011 (67 aa).

An N-terminal signal peptide occupies residues 1–20; sequence MMSKLGVLLTICLLLFPLTA. A propeptide spanning residues 21–50 is cleaved from the precursor; that stretch reads VQLDGDQPADLPALRTQDISTDHSPWFDPV. 3 cysteine pairs are disulfide-bonded: cysteine 53-cysteine 65, cysteine 54-cysteine 61, and cysteine 58-cysteine 64. A 4-hydroxyproline modification is found at proline 63.

The protein belongs to the conotoxin M superfamily. Expressed by the venom duct.

It localises to the secreted. This is Conotoxin TsMMSK-011 from Conus tessulatus (Tessellate cone).